Consider the following 268-residue polypeptide: Orotidine 5'-phosphate decarboxylase (268 aa).

Residues aspartate 38, 60–62, 92–101, tyrosine 218, and arginine 236 contribute to the substrate site; these read KTH and DRKFADIGNT. Residue lysine 94 is the Proton donor of the active site.

This sequence belongs to the OMP decarboxylase family.

It catalyses the reaction orotidine 5'-phosphate + H(+) = UMP + CO2. It functions in the pathway pyrimidine metabolism; UMP biosynthesis via de novo pathway; UMP from orotate: step 2/2. In Candida tropicalis (Yeast), this protein is Orotidine 5'-phosphate decarboxylase (URA3).